We begin with the raw amino-acid sequence, 402 residues long: NAD-dependent protein deacetylase sirtuin-7 (402 aa).

Disordered stretches follow at residues 1 to 25 (MAAG…REEQ) and 59 to 78 (VTEL…RQEE). Over residues 9–25 (RSERKAAERVRRLREEQ) the composition is skewed to basic and acidic residues. The region spanning 83–330 (PEELRRKVRE…RLLMDELGLE (248 aa)) is the Deacetylase sirtuin-type domain. Residues 108–127 (GAGI…NGVW) and 168–171 (QNCD) contribute to the NAD(+) site. Histidine 188 acts as the Proton acceptor in catalysis. Zn(2+)-binding residues include cysteine 196, cysteine 199, cysteine 226, and cysteine 229. Residues 269–271 (GSS), 298–300 (NLQ), and cysteine 316 each bind NAD(+). The tract at residues 355–385 (SHSRKSLCRSREEPPPGDQSAPLASATPILG) is disordered. Arginine 390 is modified (asymmetric dimethylarginine; alternate). Arginine 390 is subject to Omega-N-methylarginine; alternate.

It belongs to the sirtuin family. Class IV subfamily. As to quaternary structure, interacts with UBTF and the RNA polymerase I complex. Interacts with components of the B-WICH complex, such as MYBBP1A, SMARCA5/SNF2H and BAZ1B/WSTF. Interacts with ELK4, leading to stabilization at target promoters for H3K18Ac deacetylation. Interacts with histone H2A and/or histone H2B. Interacts with DNMT1. Interacts with SIRT1. Requires Zn(2+) as cofactor. Post-translationally, phosphorylated during mitosis. Methylation at Arg-390 by PRMT6 inhibits the H3K18Ac histone deacetylase activity, promoting mitochondria biogenesis and maintaining mitochondria respiration. In terms of processing, ubiquitinated via 'Lys-63'-linked ubiquitin chains. Deubiquitinated by USP7, inhibiting the H3K18Ac histone deacetylase activity and regulating gluconeogenesis. Ubiquitinated by E3 ubiquitin-protein ligase complex containing FBXO7; leading to proteasomal degradation.

It is found in the nucleus. Its subcellular location is the nucleolus. It localises to the nucleoplasm. The protein resides in the chromosome. The protein localises to the cytoplasm. The catalysed reaction is N(6)-acetyl-L-lysyl-[protein] + NAD(+) + H2O = 2''-O-acetyl-ADP-D-ribose + nicotinamide + L-lysyl-[protein]. The enzyme catalyses N(6)-glutaryl-L-lysyl-[protein] + NAD(+) + H2O = 2''-O-glutaryl-ADP-D-ribose + nicotinamide + L-lysyl-[protein]. It carries out the reaction N(6)-succinyl-L-lysyl-[protein] + NAD(+) + H2O = 2''-O-succinyl-ADP-D-ribose + nicotinamide + L-lysyl-[protein]. It catalyses the reaction N(6)-propanoyl-L-lysyl-[protein] + NAD(+) + H2O = 3''-O-propanoyl-ADP-D-ribose + nicotinamide + L-lysyl-[protein]. The catalysed reaction is N(6)-decanoyl-L-lysyl-[protein] + NAD(+) + H2O = 2''-O-decanoyl-ADP-D-ribose + nicotinamide + L-lysyl-[protein]. Its activity is regulated as follows. NAD-dependent protein-lysine deacetylase and deacylase activities are activated by nucleic acids. Histone deacetylase activity is activated by DNA. Protein-lysine deacylase activity is activated by RNA. H3K18Ac histone deacetylase activity is inhibited by methylation at Arg-390. H3K18Ac histone deacetylase activity is inhibited by deubiquitination by USP7. In terms of biological role, NAD-dependent protein-lysine deacylase that can act both as a deacetylase or deacylase (desuccinylase, depropionylase, deglutarylase and dedecanoylase), depending on the context. Specifically mediates deacetylation of histone H3 at 'Lys-18' (H3K18Ac). In contrast to other histone deacetylases, displays strong preference for a specific histone mark, H3K18Ac, directly linked to control of gene expression. H3K18Ac is mainly present around the transcription start site of genes and has been linked to activation of nuclear hormone receptors; SIRT7 thereby acts as a transcription repressor. Moreover, H3K18 hypoacetylation has been reported as a marker of malignancy in various cancers and seems to maintain the transformed phenotype of cancer cells. Also able to mediate deacetylation of histone H3 at 'Lys-36' (H3K36Ac) in the context of nucleosomes. Also mediates deacetylation of non-histone proteins, such as ATM, CDK9, DDX21, DDB1, FBL, FKBP5/FKBP51, GABPB1, RAN, RRP9/U3-55K and POLR1E/PAF53. Enriched in nucleolus where it stimulates transcription activity of the RNA polymerase I complex. Acts by mediating the deacetylation of the RNA polymerase I subunit POLR1E/PAF53, thereby promoting the association of RNA polymerase I with the rDNA promoter region and coding region. In response to metabolic stress, SIRT7 is released from nucleoli leading to hyperacetylation of POLR1E/PAF53 and decreased RNA polymerase I transcription. Required to restore the transcription of ribosomal RNA (rRNA) at the exit from mitosis. Promotes pre-ribosomal RNA (pre-rRNA) cleavage at the 5'-terminal processing site by mediating deacetylation of RRP9/U3-55K, a core subunit of the U3 snoRNP complex. Mediates 'Lys-37' deacetylation of Ran, thereby regulating the nuclear export of NF-kappa-B subunit RELA/p65. Acts as a regulator of DNA damage repair by mediating deacetylation of ATM during the late stages of DNA damage response, promoting ATM dephosphorylation and deactivation. Suppresses the activity of the DCX (DDB1-CUL4-X-box) E3 ubiquitin-protein ligase complexes by mediating deacetylation of DDB1, which prevents the interaction between DDB1 and CUL4 (CUL4A or CUL4B). Activates RNA polymerase II transcription by mediating deacetylation of CDK9, thereby promoting 'Ser-2' phosphorylation of the C-terminal domain (CTD) of RNA polymerase II. Deacetylates FBL, promoting histone-glutamine methyltransferase activity of FBL. Acts as a regulator of mitochondrial function by catalyzing deacetylation of GABPB1. Regulates Akt/AKT1 activity by mediating deacetylation of FKBP5/FKBP51. Required to prevent R-loop-associated DNA damage and transcription-associated genomic instability by mediating deacetylation and subsequent activation of DDX21, thereby overcoming R-loop-mediated stalling of RNA polymerases. In addition to protein deacetylase activity, also acts as a protein-lysine deacylase. Acts as a protein depropionylase by mediating depropionylation of Osterix (SP7), thereby regulating bone formation by osteoblasts. Acts as a histone deglutarylase by mediating deglutarylation of histone H4 on 'Lys-91' (H4K91glu); a mark that destabilizes nucleosomes by promoting dissociation of the H2A-H2B dimers from nucleosomes. Acts as a histone desuccinylase: in response to DNA damage, recruited to DNA double-strand breaks (DSBs) and catalyzes desuccinylation of histone H3 on 'Lys-122' (H3K122succ), thereby promoting chromatin condensation and DSB repair. Also promotes DSB repair by promoting H3K18Ac deacetylation, regulating non-homologous end joining (NHEJ). Along with its role in DNA repair, required for chromosome synapsis during prophase I of female meiosis by catalyzing H3K18Ac deacetylation. Involved in transcriptional repression of LINE-1 retrotransposon via H3K18Ac deacetylation, and promotes their association with the nuclear lamina. Required to stabilize ribosomal DNA (rDNA) heterochromatin and prevent cellular senescence induced by rDNA instability. Acts as a negative regulator of SIRT1 by preventing autodeacetylation of SIRT1, restricting SIRT1 deacetylase activity. In Rattus norvegicus (Rat), this protein is NAD-dependent protein deacetylase sirtuin-7.